An 858-amino-acid chain; its full sequence is Potassium transporter 7 (858 aa).

Composition is skewed to acidic residues over residues Met1 to Asp16 and Gln38 to Gly53. The tract at residues Met1–Glu68 is disordered. Residues Met1–Lys104 are Cytoplasmic-facing. A helical transmembrane segment spans residues Val105–Tyr125. Topologically, residues Thr126–Ser147 are extracellular. A helical membrane pass occupies residues Leu148–Ala168. At Asn169–Lys232 the chain is on the cytoplasmic side. A helical transmembrane segment spans residues Ile233–Pro253. The Extracellular segment spans residues Ala254–Asp269. The helical transmembrane segment at Val270 to Leu290 threads the bilayer. At Gln291–Lys297 the chain is on the cytoplasmic side. A helical membrane pass occupies residues Met298–Ile318. At Tyr319–Ser345 the chain is on the extracellular side. A helical transmembrane segment spans residues Ile346–Phe366. The Cytoplasmic segment spans residues Ala367–Thr380. Residues Phe381 to Met401 traverse the membrane as a helical segment. The Extracellular segment spans residues Glu402–Ser413. The chain crosses the membrane as a helical span at residues Ser414–Ala434. The Cytoplasmic segment spans residues Ser435–Gln470. The helical transmembrane segment at Ile471–Ile491 threads the bilayer. At Ser492 to Glu496 the chain is on the extracellular side. The helical transmembrane segment at Ile497 to Thr517 threads the bilayer. Residue Leu518 is a topological domain, cytoplasmic. The helical transmembrane segment at Ile519–Leu539 threads the bilayer. The Extracellular segment spans residues Gly540–Ser552. Residues Val553–Ile573 traverse the membrane as a helical segment. Topologically, residues Trp574–Val858 are cytoplasmic. The tract at residues Gln707–Val731 is disordered. Residues Asp714–Phe725 show a composition bias toward acidic residues. A phosphoserine mark is found at Ser719 and Ser721.

Belongs to the HAK/KUP transporter (TC 2.A.72.3) family.

The protein localises to the cell membrane. In terms of biological role, probable potassium transporter. This is Potassium transporter 7 (POT7) from Arabidopsis thaliana (Mouse-ear cress).